An 82-amino-acid chain; its full sequence is Exodeoxyribonuclease 7 small subunit (82 aa).

This sequence belongs to the XseB family. As to quaternary structure, heterooligomer composed of large and small subunits.

The protein resides in the cytoplasm. It carries out the reaction Exonucleolytic cleavage in either 5'- to 3'- or 3'- to 5'-direction to yield nucleoside 5'-phosphates.. In terms of biological role, bidirectionally degrades single-stranded DNA into large acid-insoluble oligonucleotides, which are then degraded further into small acid-soluble oligonucleotides. This chain is Exodeoxyribonuclease 7 small subunit, found in Mycobacterium avium (strain 104).